A 257-amino-acid chain; its full sequence is Snake venom serine protease nikobin (257 aa).

The signal sequence occupies residues 1 to 18; it reads MVLIRVLANLLLLQLSYA. Positions 19–24 are excised as a propeptide; the sequence is QKSSEL. One can recognise a Peptidase S1 domain in the interval 25–248; that stretch reads VIGGDECNIN…YSDWIQSIIA (224 aa). 6 disulfides stabilise this stretch: Cys-31/Cys-162, Cys-49/Cys-65, Cys-97/Cys-255, Cys-141/Cys-209, Cys-173/Cys-188, and Cys-199/Cys-224. Catalysis depends on charge relay system residues His-64 and Asp-109. 2 N-linked (GlcNAc...) asparagine glycosylation sites follow: Asn-120 and Asn-121. Ser-203 acts as the Charge relay system in catalysis. Asn-250 carries N-linked (GlcNAc...) asparagine glycosylation.

Belongs to the peptidase S1 family. Snake venom subfamily. As to quaternary structure, monomer. As to expression, expressed by the venom gland.

It is found in the secreted. Functionally, snake venom serine protease that may act in the hemostasis system of the prey. This is Snake venom serine protease nikobin (sp-VN) from Vipera nikolskii (Nikolsky's adder).